We begin with the raw amino-acid sequence, 492 residues long: UTP--glucose-1-phosphate uridylyltransferase (492 aa).

Residues 110–113 (LNGG), K124, Q183, and G210 each bind UTP. 112–113 (GG) contributes to the substrate binding site. K124 is a binding site for Mg(2+). Residues H211 and 239–241 (NID) each bind substrate. 2 residues coordinate UTP: D241 and K379. D241 is a Mg(2+) binding site. K379 is a catalytic residue. The segment at 441 to 492 (VLTVSGNVLFGKNVVLKGTVIILADEKSKICVPDGSVLEDNIIYGNLPIIDH) is oligomerization.

It belongs to the UDPGP type 1 family. As to quaternary structure, homooctamer.

It carries out the reaction alpha-D-glucose 1-phosphate + UTP + H(+) = UDP-alpha-D-glucose + diphosphate. Plays a central role as a glucosyl donor in cellular metabolic pathways. This chain is UTP--glucose-1-phosphate uridylyltransferase (UGP1), found in Encephalitozoon cuniculi (strain GB-M1) (Microsporidian parasite).